A 121-amino-acid polypeptide reads, in one-letter code: LOB domain-containing protein 23 (121 aa).

Residues 4-105 (KRCAACKYLR…NELAKTQAEI (102 aa)) enclose the LOB domain.

The protein belongs to the LOB domain-containing protein family.

The protein is LOB domain-containing protein 23 (LBD23) of Arabidopsis thaliana (Mouse-ear cress).